The following is a 61-amino-acid chain: Metallothionein-1E (61 aa).

Met-1 is subject to N-acetylmethionine. The tract at residues 1 to 29 (MDPNCSCPTGGSCSCAGSCTCKACRCTSC) is beta. Residues Cys-5, Cys-7, Cys-13, Cys-15, Cys-19, Cys-21, Cys-24, Cys-26, Cys-29, Cys-33, Cys-34, Cys-36, Cys-37, Cys-41, Cys-44, Cys-48, Cys-50, Cys-57, Cys-59, and Cys-60 each contribute to the a divalent metal cation site. The segment at 30-61 (KKSCCSCCPVGCAKCAQGCICKGASDKCSCCA) is alpha.

Belongs to the metallothionein superfamily. Type 1 family. Monomer.

Its function is as follows. Metallothioneins have a high content of cysteine residues that bind various heavy metals; these proteins are transcriptionally regulated by both heavy metals and glucocorticoids. This chain is Metallothionein-1E (MT1E), found in Sus scrofa (Pig).